A 105-amino-acid polypeptide reads, in one-letter code: Large ribosomal subunit protein bL21 (105 aa).

It belongs to the bacterial ribosomal protein bL21 family. As to quaternary structure, part of the 50S ribosomal subunit. Contacts protein L20.

Its function is as follows. This protein binds to 23S rRNA in the presence of protein L20. The polypeptide is Large ribosomal subunit protein bL21 (Porphyromonas gingivalis (strain ATCC BAA-308 / W83)).